Reading from the N-terminus, the 235-residue chain is Probable ribonuclease P protein subunit 3 (235 aa).

Belongs to the eukaryotic/archaeal RNase P protein component 3 family.

The protein localises to the nucleus. The catalysed reaction is Endonucleolytic cleavage of RNA, removing 5'-extranucleotides from tRNA precursor.. Part of ribonuclease P, a protein complex that generates mature tRNA molecules by cleaving their 5'-ends. This chain is Probable ribonuclease P protein subunit 3, found in Schizosaccharomyces pombe (strain 972 / ATCC 24843) (Fission yeast).